A 2492-amino-acid polypeptide reads, in one-letter code: Talin-A (2492 aa).

In terms of domain architecture, FERM spans 84–365 (RPQKFKLLDG…GYIEIIMKAR (282 aa)). Positions 2250 to 2492 (EEDNVLEDLE…NSRKQNYNKN (243 aa)) constitute an I/LWEQ domain.

The protein localises to the cytoplasm. Its subcellular location is the cytoskeleton. It localises to the cell cortex. Its function is as follows. Actin-binding protein that may be involved in the control of cell motility and chemotaxis. This chain is Talin-A (talA), found in Dictyostelium discoideum (Social amoeba).